The sequence spans 260 residues: Flagellar basal-body rod protein FlgG (260 aa).

Belongs to the flagella basal body rod proteins family. The basal body constitutes a major portion of the flagellar organelle and consists of four rings (L,P,S, and M) mounted on a central rod. The rod consists of about 26 subunits of FlgG in the distal portion, and FlgB, FlgC and FlgF are thought to build up the proximal portion of the rod with about 6 subunits each.

Its subcellular location is the bacterial flagellum basal body. The sequence is that of Flagellar basal-body rod protein FlgG (flgG) from Escherichia coli O157:H7.